We begin with the raw amino-acid sequence, 296 residues long: Formamidopyrimidine-DNA glycosylase (296 aa).

Pro2 serves as the catalytic Schiff-base intermediate with DNA. The Proton donor role is filled by Glu3. Lys58 serves as the catalytic Proton donor; for beta-elimination activity. The DNA site is built by His104, Arg126, and Lys169. Residues 260–296 form an FPG-type zinc finger; the sequence is SVYDRAGEACRKPGCDGTVTRIVQAGRSTFHCPRCQK. Residue Arg286 is the Proton donor; for delta-elimination activity of the active site.

This sequence belongs to the FPG family. In terms of assembly, monomer. Zn(2+) is required as a cofactor.

The catalysed reaction is Hydrolysis of DNA containing ring-opened 7-methylguanine residues, releasing 2,6-diamino-4-hydroxy-5-(N-methyl)formamidopyrimidine.. The enzyme catalyses 2'-deoxyribonucleotide-(2'-deoxyribose 5'-phosphate)-2'-deoxyribonucleotide-DNA = a 3'-end 2'-deoxyribonucleotide-(2,3-dehydro-2,3-deoxyribose 5'-phosphate)-DNA + a 5'-end 5'-phospho-2'-deoxyribonucleoside-DNA + H(+). Its function is as follows. Involved in base excision repair of DNA damaged by oxidation or by mutagenic agents. Acts as a DNA glycosylase that recognizes and removes damaged bases. Has a preference for oxidized purines, such as 7,8-dihydro-8-oxoguanine (8-oxoG). Has AP (apurinic/apyrimidinic) lyase activity and introduces nicks in the DNA strand. Cleaves the DNA backbone by beta-delta elimination to generate a single-strand break at the site of the removed base with both 3'- and 5'-phosphates. The sequence is that of Formamidopyrimidine-DNA glycosylase from Sinorhizobium fredii (strain NBRC 101917 / NGR234).